Here is a 513-residue protein sequence, read N- to C-terminus: Sugar transport protein 7 (513 aa).

Residues Met1–Tyr26 are Cytoplasmic-facing. A run of 12 helical transmembrane segments spans residues Val27 to Ile47, Gly84 to Ser104, Ile121 to Ala141, Ile144 to Val164, Gly171 to Val191, Leu205 to Pro225, Leu286 to Phe306, Tyr324 to Val344, Ala351 to Leu371, Val387 to Leu407, Ile427 to Leu447, and Phe452 to Leu472. The Cytoplasmic segment spans residues Leu473–Val513.

Belongs to the major facilitator superfamily. Sugar transporter (TC 2.A.1.1) family.

The protein resides in the cell membrane. Functionally, mediates an active uptake of hexoses, probably by sugar/hydrogen symport. This chain is Sugar transport protein 7 (STP7), found in Arabidopsis thaliana (Mouse-ear cress).